A 341-amino-acid polypeptide reads, in one-letter code: 5-formaminoimidazole-4-carboxamide-1-(beta)-D-ribofuranosyl 5'-monophosphate synthetase (341 aa).

2 residues coordinate 5-amino-1-(5-phospho-beta-D-ribosyl)imidazole-4-carboxamide: His-27 and Ser-92. Positions Arg-113 to Lys-328 constitute an ATP-grasp domain. Residues Ala-143 to Tyr-195 and Glu-217 contribute to the ATP site. Residue Asn-237 coordinates 5-amino-1-(5-phospho-beta-D-ribosyl)imidazole-4-carboxamide. 2 residues coordinate Mg(2+): Glu-276 and Glu-289.

Belongs to the phosphohexose mutase family. The cofactor is Mg(2+). Mn(2+) serves as cofactor.

It catalyses the reaction 5-amino-1-(5-phospho-beta-D-ribosyl)imidazole-4-carboxamide + formate + ATP = 5-formamido-1-(5-phospho-D-ribosyl)imidazole-4-carboxamide + ADP + phosphate. Its pathway is purine metabolism; IMP biosynthesis via de novo pathway; 5-formamido-1-(5-phospho-D-ribosyl)imidazole-4-carboxamide from 5-amino-1-(5-phospho-D-ribosyl)imidazole-4-carboxamide (formate route): step 1/1. Functionally, catalyzes the ATP- and formate-dependent formylation of 5-aminoimidazole-4-carboxamide-1-beta-d-ribofuranosyl 5'-monophosphate (AICAR) to 5-formaminoimidazole-4-carboxamide-1-beta-d-ribofuranosyl 5'-monophosphate (FAICAR) in the absence of folates. The polypeptide is 5-formaminoimidazole-4-carboxamide-1-(beta)-D-ribofuranosyl 5'-monophosphate synthetase (Pyrobaculum aerophilum (strain ATCC 51768 / DSM 7523 / JCM 9630 / CIP 104966 / NBRC 100827 / IM2)).